Consider the following 359-residue polypeptide: Gene 58 protein (359 aa).

Transmembrane regions (helical) follow at residues 12-32, 45-65, 75-95, 103-123, 132-152, 154-174, 220-240, 246-266, 271-289, 296-318, and 330-350; these read TMAAFGTGMLGAASFVWCFLF, VDELFFWGSLCVQVMMLFFCF, YLDLICAVNIVALFGCLICLQ, YLPILFSLNLIWLSVWLPVTF, YANAYFQLGFFTATTVHYLLL, FGSVTTSFLFIPFACFLIAGL, LCVVAVMTVGFAVFMTAAGVY, VLKTYLLMFQFGTFCVGGMGY, ATFVYCMTACILMPLVFVL, SVLFLAIFFLFINGVTCETTIML, and IVLSVCLLVNICITLSLNVLY.

The protein belongs to the herpesviridae BMRF2 family.

It localises to the host membrane. This is Gene 58 protein (58) from Equine herpesvirus 2 (strain 86/87) (EHV-2).